A 135-amino-acid polypeptide reads, in one-letter code: Large ribosomal subunit protein uL22 (135 aa).

This sequence belongs to the universal ribosomal protein uL22 family. In terms of assembly, part of the 50S ribosomal subunit.

Its function is as follows. This protein binds specifically to 23S rRNA; its binding is stimulated by other ribosomal proteins, e.g. L4, L17, and L20. It is important during the early stages of 50S assembly. It makes multiple contacts with different domains of the 23S rRNA in the assembled 50S subunit and ribosome. The globular domain of the protein is located near the polypeptide exit tunnel on the outside of the subunit, while an extended beta-hairpin is found that lines the wall of the exit tunnel in the center of the 70S ribosome. The sequence is that of Large ribosomal subunit protein uL22 from Christiangramia forsetii (strain DSM 17595 / CGMCC 1.15422 / KT0803) (Gramella forsetii).